Reading from the N-terminus, the 267-residue chain is Short chain dehydrogenase claC (267 aa).

NADP(+)-binding residues include I27, D73, N100, and R133. Catalysis depends on proton donor residues S149 and S150. NADP(+)-binding residues include Y164, K168, and T199. Y164 acts as the Proton acceptor in catalysis. The active-site Lowers pKa of active site Tyr is K168.

Belongs to the short-chain dehydrogenases/reductases (SDR) family.

It participates in pigment biosynthesis. Its function is as follows. Non-reducing polyketide synthase; part of the gene cluster that mediates the biosynthesis of the bianthraquinone cladofulvin, a conidial pigment not required for virulence but that plays a role in fitness and resistance to environmental stresses including UV light and low-temperature stress. The pathway begins with the synthesis of atrochrysone thioester by the polyketide synthase (PKS) claG. The atrochrysone carboxyl ACP thioesterase claF then breaks the thioester bond and releases the atrochrysone carboxylic acid from claG. This compound is decarboxylated by claH to yield emodin, which is further converted to chrysophanol hydroquinone by the reductase claC and the dehydratase claB. The cytochrome monooxygenase P450 claM then catalyzes the dimerization of nataloe-emodin to cladofulvin. This Passalora fulva (Tomato leaf mold) protein is Short chain dehydrogenase claC.